Here is a 241-residue protein sequence, read N- to C-terminus: Small ribosomal subunit protein uS3 (241 aa).

The 71-residue stretch at 39 to 109 folds into the KH type-2 domain; the sequence is IRQYITKNLS…QIRINVIEVQ (71 aa). Residues 214-241 form a disordered region; sequence EEIPMPVPSQTPRRQRRRQQFEDRSGEE. Over residues 232 to 241 the composition is skewed to basic and acidic residues; that stretch reads QQFEDRSGEE.

Belongs to the universal ribosomal protein uS3 family. Part of the 30S ribosomal subunit. Forms a tight complex with proteins S10 and S14.

In terms of biological role, binds the lower part of the 30S subunit head. Binds mRNA in the 70S ribosome, positioning it for translation. In Rippkaea orientalis (strain PCC 8801 / RF-1) (Cyanothece sp. (strain PCC 8801)), this protein is Small ribosomal subunit protein uS3.